A 584-amino-acid chain; its full sequence is UvrABC system protein C (584 aa).

One can recognise a GIY-YIG domain in the interval 12–89 (NKPGCYLFFN…IKKYHPKYNV (78 aa)). The 36-residue stretch at 194 to 229 (NQVKQTLVKQMQKASDNLQFEQAQRIKDQITSLDFI) folds into the UVR domain.

The protein belongs to the UvrC family. Interacts with UvrB in an incision complex.

The protein localises to the cytoplasm. The UvrABC repair system catalyzes the recognition and processing of DNA lesions. UvrC both incises the 5' and 3' sides of the lesion. The N-terminal half is responsible for the 3' incision and the C-terminal half is responsible for the 5' incision. The protein is UvrABC system protein C of Mycoplasma mycoides subsp. mycoides SC (strain CCUG 32753 / NCTC 10114 / PG1).